A 186-amino-acid polypeptide reads, in one-letter code: Casparian strip membrane protein 5 (186 aa).

Topologically, residues 1-23 (MEHGEISSKAPLVAPVAAGVNRA) are cytoplasmic. Residues 24-44 (VAVVDTFLRFIAIIGTIGSAI) traverse the membrane as a helical segment. The Extracellular portion of the chain corresponds to 45–73 (AMGTTNETLPFFTQFIQFEAKYSDLPSFT). Asparagine 50 is a glycosylation site (N-linked (GlcNAc...) asparagine). Residues 74–94 (FFVAANAVVCTYLVLSIPLSI) form a helical membrane-spanning segment. Over 95 to 106 (VHILRPRARYSR) the chain is Cytoplasmic. Residues 107–127 (LFLVFFDTAMLALLTAGASAA) form a helical membrane-spanning segment. Topologically, residues 128–160 (AAIVYLAHKGNVRANWFSICQQFDSFCERISGS) are extracellular. A helical transmembrane segment spans residues 161–181 (LIGSFAAMVLLVVLITLSAFA). At 182–186 (LARRH) the chain is on the cytoplasmic side.

Belongs to the Casparian strip membrane proteins (CASP) family. In terms of assembly, homodimer and heterodimers.

It localises to the cell membrane. In terms of biological role, regulates membrane-cell wall junctions and localized cell wall deposition. Required for establishment of the Casparian strip membrane domain (CSD) and the subsequent formation of Casparian strips, a cell wall modification of the root endodermis that determines an apoplastic barrier between the intraorganismal apoplasm and the extraorganismal apoplasm and prevents lateral diffusion. The polypeptide is Casparian strip membrane protein 5 (Oryza sativa subsp. japonica (Rice)).